The primary structure comprises 673 residues: UvrABC system protein B (673 aa).

A Helicase ATP-binding domain is found at 26–183; the sequence is EGLEDGLAHQ…RRLAELQYAR (158 aa). 39–46 is a binding site for ATP; it reads GVTGSGKT. The short motif at 92 to 115 is the Beta-hairpin element; that stretch reads YYDYYQPEAYVPSSDTFIEKDASV. A Helicase C-terminal domain is found at 431 to 597; the sequence is QVDDLLSEIR…GLNKKVVDIL (167 aa). The interval 608–627 is disordered; sequence AKGRGKSRPIVEPDNVPMDM. A UVR domain is found at 633 to 668; it reads QQKIHELEGLMMQHAQNLEFEEAAQIRDQLHLLREL.

This sequence belongs to the UvrB family. Forms a heterotetramer with UvrA during the search for lesions. Interacts with UvrC in an incision complex.

The protein localises to the cytoplasm. Its function is as follows. The UvrABC repair system catalyzes the recognition and processing of DNA lesions. A damage recognition complex composed of 2 UvrA and 2 UvrB subunits scans DNA for abnormalities. Upon binding of the UvrA(2)B(2) complex to a putative damaged site, the DNA wraps around one UvrB monomer. DNA wrap is dependent on ATP binding by UvrB and probably causes local melting of the DNA helix, facilitating insertion of UvrB beta-hairpin between the DNA strands. Then UvrB probes one DNA strand for the presence of a lesion. If a lesion is found the UvrA subunits dissociate and the UvrB-DNA preincision complex is formed. This complex is subsequently bound by UvrC and the second UvrB is released. If no lesion is found, the DNA wraps around the other UvrB subunit that will check the other stand for damage. The sequence is that of UvrABC system protein B from Escherichia coli O81 (strain ED1a).